A 313-amino-acid chain; its full sequence is Olfactory receptor 10P1 (313 aa).

At 1-25 (MAGENHTTLPEFLLLGFSDLKALQG) the chain is on the extracellular side. Residue Asn-5 is glycosylated (N-linked (GlcNAc...) asparagine). A helical transmembrane segment spans residues 26–46 (PLFWVVLLVYLVTLLGNSLII). At 47–54 (LLTQVSPA) the chain is on the cytoplasmic side. Residues 55–75 (LHSPMYFFLRQLSVVELFYTT) form a helical membrane-spanning segment. At 76–100 (DIVPRTLANLGSPHPQAISFQGCAA) the chain is on the extracellular side. A helical transmembrane segment spans residues 101–121 (QMYVFIVLGISECCLLTAMAY). Residues 122–140 (DRYVAICQPLRYSTLLSPR) lie on the Cytoplasmic side of the membrane. A helical membrane pass occupies residues 141–161 (ACMAMVGTSWLTGIITATTHA). Over 162 to 198 (SLIFSLPFRSHPIIPHFLCDILPVLRLASAGKHRSEI) the chain is Extracellular. A helical transmembrane segment spans residues 199–218 (SVMTATIVFIMIPFSLIVTS). The Cytoplasmic portion of the chain corresponds to 219-238 (YIRILGAILAMASTQSRRKV). Residues 239 to 259 (FSTCSSHLLVVSLFFGTASIT) form a helical membrane-spanning segment. Over 260–272 (YIRPQAGSSVTTD) the chain is Extracellular. The chain crosses the membrane as a helical span at residues 273 to 293 (RVLSLFYTVITPMLNPIIYTL). Residues 294-313 (RNKDVRRALRHLVKRQRPSP) are Cytoplasmic-facing.

This sequence belongs to the G-protein coupled receptor 1 family.

It is found in the cell membrane. In terms of biological role, odorant receptor. The protein is Olfactory receptor 10P1 (OR10P1) of Homo sapiens (Human).